Reading from the N-terminus, the 193-residue chain is Phosphoheptose isomerase (193 aa).

The SIS domain occupies 37-193; it reads LADSFKAGGK…MLIEKEMAKG (157 aa). 52-54 lines the substrate pocket; sequence NGG. Zn(2+)-binding residues include histidine 61 and glutamate 65. Residues glutamate 65, 93 to 94, 119 to 121, serine 124, and glutamine 172 contribute to the substrate site; these read ND and STS. Zn(2+) is bound by residues glutamine 172 and histidine 180.

The protein belongs to the SIS family. GmhA subfamily. As to quaternary structure, homotetramer. The cofactor is Zn(2+).

Its subcellular location is the cytoplasm. It carries out the reaction 2 D-sedoheptulose 7-phosphate = D-glycero-alpha-D-manno-heptose 7-phosphate + D-glycero-beta-D-manno-heptose 7-phosphate. It functions in the pathway carbohydrate biosynthesis; D-glycero-D-manno-heptose 7-phosphate biosynthesis; D-glycero-alpha-D-manno-heptose 7-phosphate and D-glycero-beta-D-manno-heptose 7-phosphate from sedoheptulose 7-phosphate: step 1/1. Functionally, catalyzes the isomerization of sedoheptulose 7-phosphate in D-glycero-D-manno-heptose 7-phosphate. The polypeptide is Phosphoheptose isomerase (Klebsiella pneumoniae subsp. pneumoniae (strain ATCC 700721 / MGH 78578)).